The sequence spans 72 residues: Guanine nucleotide-binding protein subunit gamma (72 aa).

The tract at residues 32–72 (MVSVAPPKANPSVSSKTKQQQHFKPGKATKDKATTKCCTIS) is disordered. The S-palmitoyl cysteine moiety is linked to residue Cys-68. A Cysteine methyl ester modification is found at Cys-69. Cys-69 carries S-farnesyl cysteine lipidation. The propeptide at 70–72 (TIS) is removed in mature form.

This sequence belongs to the G protein gamma family. In terms of assembly, g proteins are composed of 3 units, alpha, beta and gamma. Binding of the beta-gamma subunit complex (git5-git11) to the alpha subunit (gpa2) facilitates interaction with GPCR git3.

It is found in the cell membrane. Its function is as follows. Gamma subunit of the heterotrimeric guanine nucleotide-binding protein (G protein) involved in glucose-induced cAMP signaling. The beta-gamma subunits (git5-git11) promote binding of the alpha subunit gpa2 to GPCR git3, which senses extracellular glucose, to activate cAMP-PKA signaling and repress sexual development and gluconeogenesis. In Schizosaccharomyces pombe (strain 972 / ATCC 24843) (Fission yeast), this protein is Guanine nucleotide-binding protein subunit gamma (git11).